The primary structure comprises 234 residues: Ras-related protein Rab-20 (234 aa).

The GTP site is built by Gly-17, Lys-18, Thr-19, Asp-32, and Thr-36. Residue Thr-19 participates in Mg(2+) binding. Short sequence motifs (switch) lie at residues Arg-28–Phe-41 and Asp-55–Gly-72. Mg(2+) is bound by residues Thr-36 and Asp-55. Gly-58, Asn-113, Lys-114, and Asp-116 together coordinate GTP. The tract at residues Gly-125–Arg-144 is disordered. Residues Gln-126–Ser-142 show a composition bias toward basic and acidic residues. Residues Ala-184 and Lys-185 each contribute to the GTP site. Residues Arg-212–Ala-234 are disordered. Basic residues predominate over residues Lys-223–Ala-234. Residues Cys-232 and Cys-233 are each lipidated (S-geranylgeranyl cysteine).

It belongs to the small GTPase superfamily. Rab family. Mg(2+) is required as a cofactor. In terms of tissue distribution, low or absent expression in normal pancreas and stronger expression in 15 of 18 exocrine pancreatic adenocarcinomas (at protein level).

Its subcellular location is the golgi apparatus. It is found in the cytoplasmic vesicle. It localises to the phagosome. The protein localises to the phagosome membrane. It carries out the reaction GTP + H2O = GDP + phosphate + H(+). Regulated by guanine nucleotide exchange factors (GEFs) which promote the exchange of bound GDP for free GTP. Regulated by GTPase activating proteins (GAPs) which increase the GTP hydrolysis activity. Inhibited by GDP dissociation inhibitors (GDIs). Its function is as follows. The small GTPases Rab are key regulators of intracellular membrane trafficking, from the formation of transport vesicles to their fusion with membranes. Rabs cycle between an inactive GDP-bound form and an active GTP-bound form that is able to recruit to membranes different sets of downstream effectors directly responsible for vesicle formation, movement, tethering and fusion. RAB20 plays a role in apical endocytosis/recycling. Plays a role in the maturation and acidification of phagosomes that engulf pathogens, such as S.aureus and M.tuberculosis. Plays a role in the fusion of phagosomes with lysosomes. The protein is Ras-related protein Rab-20 of Homo sapiens (Human).